Here is a 375-residue protein sequence, read N- to C-terminus: MSTAGKVIKCKAAVLWELKKPFSIEEVEVAPPKAQEVRIKMVAVGICGTDDHVVSGTMVTPLPAILGHEAAGIVESVGEGVTTVKPGDKVIPLAVPQCGKCRICKNPESNYCLKNDVSNPQGTLQDGTSRFTCRGKPIHHFLGISTFSQYTVVDENAVAKIDAASPLAKVCLIGCGFSTGYGSAVNVAKVTPGSTCAVFGLGGVGLSVVMGCKAAGAARIIAVDINKDKFAKAKELGATECINPQDYNKPIQEVLKEMTDGGVDFSFEVIGRLDTMMASLLCCHEACGTSVIVGVPPDSQNLSMNPMLLLTGRTWKGAVLGGFKSKECVPKLVADFMAKKFSLDALITHVLPFEKINDGFDLLHSGKSIRTILMF.

N-acetylserine is present on Ser2. Ser23 carries the phosphoserine modification. Zn(2+) is bound at residue Cys47. 48–52 (GTDDH) is an NAD(+) binding site. His68, Cys98, Cys101, Cys104, Cys112, and Cys175 together coordinate Zn(2+). Residues 200–205 (GLGGVG), Asp224, Lys229, Ile270, 293–295 (VGV), 318–320 (AVL), and Arg370 contribute to the NAD(+) site.

This sequence belongs to the zinc-containing alcohol dehydrogenase family. As to quaternary structure, dimer of identical or heterodimer of closely related subunits alpha, beta, or gamma that are encoded by genes ADH1A, ADH1B, and ADH1C, respectively. It depends on Zn(2+) as a cofactor.

It localises to the cytoplasm. It catalyses the reaction a primary alcohol + NAD(+) = an aldehyde + NADH + H(+). The catalysed reaction is a secondary alcohol + NAD(+) = a ketone + NADH + H(+). It carries out the reaction butan-1-ol + NAD(+) = butanal + NADH + H(+). The enzyme catalyses 1-propanol + NAD(+) = propanal + NADH + H(+). Functionally, alcohol dehydrogenase. Oxidizes primary as well as secondary alcohols. Ethanol is a very poor substrate. The protein is Alcohol dehydrogenase 1A (ADH1A) of Pongo abelii (Sumatran orangutan).